Reading from the N-terminus, the 138-residue chain is Class I hydrophobin 3 (138 aa).

The signal sequence occupies residues 1 to 16; it reads MRFFLAITALVAAVTA. Cystine bridges form between Cys-40–Cys-111, Cys-48–Cys-105, Cys-49–Cys-87, and Cys-112–Cys-130.

Belongs to the fungal hydrophobin family. As to quaternary structure, self-assembles to form functional amyloid fibrils called rodlets. Self-assembly into fibrillar rodlets occurs spontaneously at hydrophobic:hydrophilic interfaces and the rodlets further associate laterally to form amphipathic monolayers.

The protein localises to the secreted. It localises to the cell wall. Its function is as follows. Aerial growth, conidiation, and dispersal of filamentous fungi in the environment rely upon a capability of their secreting small amphipathic proteins called hydrophobins (HPBs) with low sequence identity. Class I can self-assemble into an outermost layer of rodlet bundles on aerial cell surfaces, conferring cellular hydrophobicity that supports fungal growth, development and dispersal; whereas Class II form highly ordered films at water-air interfaces through intermolecular interactions but contribute nothing to the rodlet structure. HYD3 is a class I hydrophobin that contributes to the formation of aerial hyphae and fruiting bodies. The sequence is that of Class I hydrophobin 3 from Cordyceps militaris (Caterpillar fungus).